The chain runs to 199 residues: UPF0637 protein LVIS_1261 (199 aa).

This sequence belongs to the UPF0637 family.

The sequence is that of UPF0637 protein LVIS_1261 from Levilactobacillus brevis (strain ATCC 367 / BCRC 12310 / CIP 105137 / JCM 1170 / LMG 11437 / NCIMB 947 / NCTC 947) (Lactobacillus brevis).